Consider the following 288-residue polypeptide: Phenazine biosynthesis-like domain-containing protein 1 (288 aa).

Residue glutamate 46 is part of the active site.

This sequence belongs to the PhzF family.

The chain is Phenazine biosynthesis-like domain-containing protein 1 (Pbld1) from Mus musculus (Mouse).